We begin with the raw amino-acid sequence, 1109 residues long: Pesticidal crystal protein Cry28Aa (1109 aa).

Belongs to the delta endotoxin family.

Promotes colloidosmotic lysis by binding to the midgut epithelial cells of insects. The chain is Pesticidal crystal protein Cry28Aa (cry28Aa) from Bacillus thuringiensis subsp. finitimus.